We begin with the raw amino-acid sequence, 163 residues long: Phosphopantetheine adenylyltransferase (163 aa).

Substrate is bound at residue serine 9. ATP is bound by residues 9-10 (SF) and histidine 17. Substrate is bound by residues lysine 41, threonine 73, and arginine 87. Residues 88 to 90 (GLR), glutamate 98, and 123 to 129 (YSYLSSS) each bind ATP.

It belongs to the bacterial CoaD family. As to quaternary structure, homohexamer. The cofactor is Mg(2+).

It localises to the cytoplasm. The catalysed reaction is (R)-4'-phosphopantetheine + ATP + H(+) = 3'-dephospho-CoA + diphosphate. It participates in cofactor biosynthesis; coenzyme A biosynthesis; CoA from (R)-pantothenate: step 4/5. Functionally, reversibly transfers an adenylyl group from ATP to 4'-phosphopantetheine, yielding dephospho-CoA (dPCoA) and pyrophosphate. The protein is Phosphopantetheine adenylyltransferase of Lachnoclostridium phytofermentans (strain ATCC 700394 / DSM 18823 / ISDg) (Clostridium phytofermentans).